Consider the following 490-residue polypeptide: Dual specificity protein kinase CLK3 (490 aa).

Tyr-7 carries the post-translational modification Phosphotyrosine. 6 positions are modified to phosphoserine: Ser-9, Ser-49, Ser-51, Ser-67, Ser-76, and Ser-78. The segment at 22–138 (RRRSYSREHE…SKRSSRSVED (117 aa)) is disordered. Composition is skewed to basic and acidic residues over residues 26–56 (YSRE…DRLP) and 63–76 (EHRD…EDRS). Positions 103-116 (TRKHAHHCHKRRTR) are enriched in basic residues. Positions 117-130 (SCSSASSRSQQSSK) are enriched in low complexity. Residue Ser-135 is modified to Phosphoserine. The Protein kinase domain maps to 156-472 (YEIVGNLGEG…LAEALLHPFF (317 aa)). ATP is bound by residues 162–170 (LGEGTFGKV) and Lys-186. Asp-283 functions as the Proton acceptor in the catalytic mechanism.

This sequence belongs to the protein kinase superfamily. CMGC Ser/Thr protein kinase family. Lammer subfamily. In terms of processing, autophosphorylates on all three types of residues.

The protein resides in the nucleus. The protein localises to the cytoplasm. It localises to the cytoplasmic vesicle. Its subcellular location is the secretory vesicle. It is found in the acrosome. The enzyme catalyses L-seryl-[protein] + ATP = O-phospho-L-seryl-[protein] + ADP + H(+). It catalyses the reaction L-threonyl-[protein] + ATP = O-phospho-L-threonyl-[protein] + ADP + H(+). It carries out the reaction L-tyrosyl-[protein] + ATP = O-phospho-L-tyrosyl-[protein] + ADP + H(+). Leucettine L41 inhibits its kinase activity and affects the regulation of alternative splicing mediated by phosphorylation of SR proteins. Functionally, dual specificity kinase acting on both serine/threonine and tyrosine-containing substrates. Phosphorylates serine- and arginine-rich (SR) proteins of the spliceosomal complex. May be a constituent of a network of regulatory mechanisms that enable SR proteins to control RNA splicing and can cause redistribution of SR proteins from speckles to a diffuse nucleoplasmic distribution. Phosphorylates SRSF1 and SRSF3. Regulates the alternative splicing of tissue factor (F3) pre-mRNA in endothelial cells. The protein is Dual specificity protein kinase CLK3 (CLK3) of Bos taurus (Bovine).